A 478-amino-acid chain; its full sequence is Cytochrome c biogenesis protein CcsB (478 aa).

A run of 3 helical transmembrane segments spans residues 30-50, 89-109, and 175-195; these read LRLAIGLFLAIALLSAVGTVI, TSWFLALLILFGSSLAACSLT, and FGPILVHVSLLLILLGAIWGS. Positions 453-478 are disordered; it reads LSSPPSPAKEPPPAARVGGTESLANG. A compositionally biased stretch (pro residues) spans 456–466; that stretch reads PPSPAKEPPPA.

The protein belongs to the Ccs1/CcsB family. May interact with CcsA.

The protein localises to the cellular thylakoid membrane. Required during biogenesis of c-type cytochromes (cytochrome c6 and cytochrome f) at the step of heme attachment. The chain is Cytochrome c biogenesis protein CcsB from Synechococcus sp. (strain JA-3-3Ab) (Cyanobacteria bacterium Yellowstone A-Prime).